The following is a 739-amino-acid chain: Nuclear pore complex protein NUP62 (739 aa).

Repeat copies occupy residues 6–7, 17–18, 50–51, 52–53, 68–69, 70–71, 78–79, 80–81, 91–92, 93–94, 108–109, 110–111, 124–125, 141–142, 159–160, 174–175, 186–187, 207–208, and 221–222. The 26 X 2 AA repeats of F-G stretch occupies residues 6–450; that stretch reads FGQSNSVGGF…AATFSTTGFG (445 aa). The disordered stretch occupies residues 18 to 67; that stretch reads GSSSATNSSSASSTTSPLSFSFNQSSNPSSTGFGFGSSVSSTPASSTTPS. Over residues 79–218 the composition is skewed to low complexity; it reads GFGSSASSST…ASSSAATSTS (140 aa). The tract at residues 79-245 is disordered; sequence GFGSSASSST…VASSAPGSSS (167 aa). Residues 232–245 show a composition bias toward low complexity; it reads PSFSVASSAPGSSS. Repeat copies occupy residues 248 to 249, 271 to 272, 280 to 281, 308 to 309, and 366 to 367. Disordered stretches follow at residues 281–329, 341–366, and 399–418; these read GSSS…ASPF, TASS…SFSF, and TTTS…SAPA. A run of 2 repeats spans residues 426-427 and 449-450. The disordered stretch occupies residues 471–533; it reads KTSTPASSSQ…AVAPVAGSPK (63 aa). Residues 472-519 show a composition bias toward low complexity; the sequence is TSTPASSSQPQTTSPAFSFSLPSSTSTTAPATSSATTTQTTLVVPSSS. A coiled-coil region spans residues 584-674; the sequence is RLEIEVAKVV…IRSIIQSVNA (91 aa).

Belongs to the nucleoporin NSP1/NUP62 family. Part of the nuclear pore complex (NPC). The NPC has an eight-fold symmetrical structure comprising a central transport channel and two rings, the cytoplasmic and nuclear rings, to which eight filaments are attached. The cytoplasmic filaments have loose ends, while the nuclear filaments are joined in a distal ring, forming a nuclear basket. NPCs are highly dynamic in configuration and composition, and can be devided in 3 subcomplexes, the NUP62 subcomplex, the NUP107-160 subcomplex and the NUP93 subcomplex, containing approximately 30 different nucleoporin proteins. Interacts with NUP58 and the importin KPNB1.

It localises to the nucleus envelope. Its subcellular location is the nucleus. The protein localises to the nuclear pore complex. The chain is Nuclear pore complex protein NUP62 from Arabidopsis thaliana (Mouse-ear cress).